The following is an 89-amino-acid chain: MAQKKAGGSSRNGRDSVGQRRGVKRFGGQRVLAGNILVRQLGTTVHPGVNVGMGRDFTLFAKIDGVVRFEKYIRKRRVLTRVHVEAAAS.

The segment at 1–26 (MAQKKAGGSSRNGRDSVGQRRGVKRF) is disordered.

It belongs to the bacterial ribosomal protein bL27 family.

The sequence is that of Large ribosomal subunit protein bL27 from Desulfovibrio desulfuricans (strain ATCC 27774 / DSM 6949 / MB).